The following is a 219-amino-acid chain: Dephospho-CoA kinase (219 aa).

Residues 8-215 (LVGVTGGIGS…EAAASGPDCQ (208 aa)) enclose the DPCK domain. 16 to 21 (GSGKST) contributes to the ATP binding site.

Belongs to the CoaE family.

The protein resides in the cytoplasm. The catalysed reaction is 3'-dephospho-CoA + ATP = ADP + CoA + H(+). Its pathway is cofactor biosynthesis; coenzyme A biosynthesis; CoA from (R)-pantothenate: step 5/5. Its function is as follows. Catalyzes the phosphorylation of the 3'-hydroxyl group of dephosphocoenzyme A to form coenzyme A. The sequence is that of Dephospho-CoA kinase from Chlorobium luteolum (strain DSM 273 / BCRC 81028 / 2530) (Pelodictyon luteolum).